The primary structure comprises 618 residues: Chaperone protein HscA homolog (618 aa).

Belongs to the heat shock protein 70 family.

Functionally, chaperone involved in the maturation of iron-sulfur cluster-containing proteins. Has a low intrinsic ATPase activity which is markedly stimulated by HscB. This Methylibium petroleiphilum (strain ATCC BAA-1232 / LMG 22953 / PM1) protein is Chaperone protein HscA homolog.